The primary structure comprises 124 residues: Multifunctional methyltransferase subunit TRM112 homolog A (124 aa).

In terms of domain architecture, TRM112 spans 2-120; sequence RLITHNMLSC…NKGIPNMLLH (119 aa).

It belongs to the TRM112 family. Interacts with TRM9.

Functionally, acts as an activator of both rRNA/tRNA and protein methyltransferases. Required for TRM9 tRNA methyltransferase activity. Involved in the regulation of cell division progression during organ growth. Required for the expression of cell cycle-related genes, and the G2-M phase progression during organogenesis. In Arabidopsis thaliana (Mouse-ear cress), this protein is Multifunctional methyltransferase subunit TRM112 homolog A.